The chain runs to 740 residues: Probable RNA-dependent RNA polymerase 1 (740 aa).

This sequence belongs to the RdRP family.

It carries out the reaction RNA(n) + a ribonucleoside 5'-triphosphate = RNA(n+1) + diphosphate. Probably involved in the RNA silencing pathway and required for the generation of small interfering RNAs (siRNAs). This is Probable RNA-dependent RNA polymerase 1 (RDR1) from Oryza sativa subsp. japonica (Rice).